The chain runs to 342 residues: Ribosomal RNA small subunit methyltransferase C (342 aa).

This sequence belongs to the methyltransferase superfamily. RsmC family. As to quaternary structure, monomer.

It localises to the cytoplasm. The catalysed reaction is guanosine(1207) in 16S rRNA + S-adenosyl-L-methionine = N(2)-methylguanosine(1207) in 16S rRNA + S-adenosyl-L-homocysteine + H(+). Specifically methylates the guanine in position 1207 of 16S rRNA in the 30S particle. The polypeptide is Ribosomal RNA small subunit methyltransferase C (Citrobacter koseri (strain ATCC BAA-895 / CDC 4225-83 / SGSC4696)).